Here is a 109-residue protein sequence, read N- to C-terminus: Putative gametogenetin-binding protein 1 (109 aa).

The segment at 24–109 (KAFRSTDTVG…KGEMGNWPPE (86 aa)) is interaction with GGN.

Interacts with CCDC159. Interacts with GGN.

Its subcellular location is the cytoplasm. The protein resides in the membrane. It localises to the golgi apparatus. In terms of biological role, may be involved in spermatogenesis. This is Putative gametogenetin-binding protein 1 (GGNBP1) from Homo sapiens (Human).